A 342-amino-acid polypeptide reads, in one-letter code: Biotin synthase (342 aa).

The Radical SAM core domain occupies 38–262 (GQVQISTLLS…MMPTSYVRLS (225 aa)). [4Fe-4S] cluster contacts are provided by Cys53, Cys57, and Cys60. 4 residues coordinate [2Fe-2S] cluster: Cys97, Cys128, Cys188, and Arg260.

The protein belongs to the radical SAM superfamily. Biotin synthase family. Homodimer. It depends on [4Fe-4S] cluster as a cofactor. [2Fe-2S] cluster is required as a cofactor.

The enzyme catalyses (4R,5S)-dethiobiotin + (sulfur carrier)-SH + 2 reduced [2Fe-2S]-[ferredoxin] + 2 S-adenosyl-L-methionine = (sulfur carrier)-H + biotin + 2 5'-deoxyadenosine + 2 L-methionine + 2 oxidized [2Fe-2S]-[ferredoxin]. It participates in cofactor biosynthesis; biotin biosynthesis; biotin from 7,8-diaminononanoate: step 2/2. Its function is as follows. Catalyzes the conversion of dethiobiotin (DTB) to biotin by the insertion of a sulfur atom into dethiobiotin via a radical-based mechanism. In Baumannia cicadellinicola subsp. Homalodisca coagulata, this protein is Biotin synthase.